The sequence spans 334 residues: N-acetyl-gamma-glutamyl-phosphate reductase (334 aa).

Residue C154 is part of the active site.

It belongs to the NAGSA dehydrogenase family. Type 1 subfamily.

It is found in the cytoplasm. It carries out the reaction N-acetyl-L-glutamate 5-semialdehyde + phosphate + NADP(+) = N-acetyl-L-glutamyl 5-phosphate + NADPH + H(+). It functions in the pathway amino-acid biosynthesis; L-arginine biosynthesis; N(2)-acetyl-L-ornithine from L-glutamate: step 3/4. Its function is as follows. Catalyzes the NADPH-dependent reduction of N-acetyl-5-glutamyl phosphate to yield N-acetyl-L-glutamate 5-semialdehyde. This Yersinia pestis protein is N-acetyl-gamma-glutamyl-phosphate reductase.